A 114-amino-acid polypeptide reads, in one-letter code: Ribonuclease P protein component (114 aa).

This sequence belongs to the RnpA family. In terms of assembly, consists of a catalytic RNA component (M1 or rnpB) and a protein subunit.

It catalyses the reaction Endonucleolytic cleavage of RNA, removing 5'-extranucleotides from tRNA precursor.. Functionally, RNaseP catalyzes the removal of the 5'-leader sequence from pre-tRNA to produce the mature 5'-terminus. It can also cleave other RNA substrates such as 4.5S RNA. The protein component plays an auxiliary but essential role in vivo by binding to the 5'-leader sequence and broadening the substrate specificity of the ribozyme. The sequence is that of Ribonuclease P protein component from Buchnera aphidicola subsp. Schizaphis graminum (strain Sg).